Consider the following 399-residue polypeptide: MTSKMENNKDESISTKNALEEKSNETKDETSKRKHDPAEEESAVSTKVSKSEPLEDKGNAEVKEFKETTKSNGVKPEVEITESTKIQKESNTEPCISTGGKVEEKELKVNKDVDENEGHVAVETGKKESAAKPAASVSPFSQFASFSNASSPFSNVSTASSEPKEEKSAFGAFASSKSAFTMKSVKDSPFKKFAAGTAVETESGSGKEKENDKKSSENFDELLANTSAKAFENQKGSAGETKSEPKEADKGSGDSTKSTMHQLSDSEIITGEEEEESIFSVRARLYVVADEKKTWKERGQGILKVNVPKQRGSGSGRLLMRNDAVHRVIMNVPLFQGMSKKSLQIASASSGGSANYLKIFVIENGKSVLYAVRVKDNSLAEQLRNHVLEAIPKGGREDA.

Composition is skewed to basic and acidic residues over residues 1–31 (MTSK…DETS), 49–69 (SKSE…KETT), and 101–130 (KVEE…KESA). Disordered regions lie at residues 1–173 (MTSK…FGAF) and 191–269 (KKFA…SEII). Positions 138 to 157 (SPFSQFASFSNASSPFSNVS) are enriched in low complexity. 2 stretches are compositionally biased toward basic and acidic residues: residues 205-217 (SGKE…KSSE) and 241-252 (TKSEPKEADKGS). Over residues 253–263 (GDSTKSTMHQL) the composition is skewed to polar residues. A RanBD1 domain is found at 256–396 (TKSTMHQLSD…VLEAIPKGGR (141 aa)).

In terms of processing, phosphorylated.

It localises to the nucleus. This chain is Brefeldin A resistance protein (hba1), found in Schizosaccharomyces pombe (strain 972 / ATCC 24843) (Fission yeast).